Consider the following 510-residue polypeptide: NAD(P)H-quinone oxidoreductase subunit 2 A, chloroplastic (510 aa).

Transmembrane regions (helical) follow at residues 24 to 44 (LLLF…GLIL), 59 to 79 (WFYF…LFRW), 99 to 119 (IFQF…VEYI), 124 to 144 (MAIT…MFLC), 149 to 169 (LITI…LSGY), 183 to 203 (YLLM…WLYG), 229 to 249 (ISLA…PAPF), 295 to 315 (WHLL…LLAI), 323 to 343 (MLAY…IVGD), 354 to 374 (YMLF…LFGL), 395 to 415 (ALSL…AGFF), and 418 to 438 (LYLF…IGLL).

Belongs to the complex I subunit 2 family. In terms of assembly, NDH is composed of at least 16 different subunits, 5 of which are encoded in the nucleus.

It localises to the plastid. The protein localises to the chloroplast thylakoid membrane. The catalysed reaction is a plastoquinone + NADH + (n+1) H(+)(in) = a plastoquinol + NAD(+) + n H(+)(out). It carries out the reaction a plastoquinone + NADPH + (n+1) H(+)(in) = a plastoquinol + NADP(+) + n H(+)(out). NDH shuttles electrons from NAD(P)H:plastoquinone, via FMN and iron-sulfur (Fe-S) centers, to quinones in the photosynthetic chain and possibly in a chloroplast respiratory chain. The immediate electron acceptor for the enzyme in this species is believed to be plastoquinone. Couples the redox reaction to proton translocation, and thus conserves the redox energy in a proton gradient. This Triticum aestivum (Wheat) protein is NAD(P)H-quinone oxidoreductase subunit 2 A, chloroplastic.